Reading from the N-terminus, the 1755-residue chain is Periplakin (1755 aa).

Residues 1-11 (MHSLFRKRNKG) show a composition bias toward basic residues. The tract at residues 1–20 (MHSLFRKRNKGKYSPTVQTR) is disordered. S14 bears the Phosphoserine mark. Coiled coils occupy residues 16–125 (TVQT…KQMY) and 182–387 (LAKD…QQVV). Spectrin repeat units lie at residues 214–315 (QDYM…SHLK), 321–483 (HQFH…HALQ), and 503–610 (RQLL…EKVD). Residues 397-453 (LKPIPVEALCDFESDQGLISRGYSYTLQKNNGESWELTDSTGKKLAAPAVCFIIPPT) form the SH3 domain. At S463 the chain carries Phosphoserine. Coiled coils occupy residues 611 to 819 (VANR…RNSH) and 883 to 1644 (LSSG…SVAV). Residues S885, S947, S1583, and S1656 each carry the phosphoserine modification. Positions 1556-1755 (ELDFLREENH…ELAVLVSGQK (200 aa)) are interacts with BFSP2 and VIM. Plectin repeat units follow at residues 1650–1684 (ENHLRRSIVVIDPDTGRELSPEEAHRAGLIDWKMF) and 1699–1734 (VKGPNGESSVIHDRKSGKKFSIEDALQSGRLTAAQY).

This sequence belongs to the plakin or cytolinker family. Homodimer or a heterodimer with EVPL. Found in a complex composed of PPL (via C-terminal linker domain), BFSP1 and BFSP2 in the retinal lens. Within the complex interacts (via C-terminal linker domain) with BFSP2. Interacts with VIM. Binds to the PH domain of AKT1. Interacts with FCGR1A. May interact with PPHLN1. As to expression, expressed in the retinal lens (at protein level).

It localises to the cell junction. The protein localises to the desmosome. Its subcellular location is the cytoplasm. It is found in the cytoskeleton. The protein resides in the cell membrane. Component of the cornified envelope of keratinocytes. May link the cornified envelope to desmosomes and intermediate filaments. May act as a localization signal in PKB/AKT-mediated signaling. The polypeptide is Periplakin (Ppl) (Mus musculus (Mouse)).